The following is a 434-amino-acid chain: Trigger factor (434 aa).

The PPIase FKBP-type domain maps to 160 to 245 (GDKAKINFVG…LNEVQAANLP (86 aa)).

Belongs to the FKBP-type PPIase family. Tig subfamily.

It is found in the cytoplasm. It catalyses the reaction [protein]-peptidylproline (omega=180) = [protein]-peptidylproline (omega=0). Functionally, involved in protein export. Acts as a chaperone by maintaining the newly synthesized protein in an open conformation. Functions as a peptidyl-prolyl cis-trans isomerase. The protein is Trigger factor of Shewanella halifaxensis (strain HAW-EB4).